A 528-amino-acid polypeptide reads, in one-letter code: Transcription factor cghF (528 aa).

Residues 232 to 283 (TPPNHATSSTPTSTRTPPTYHPHGPRPKSPLSSTPSPRTESTKSAAPSRDLA) form a disordered region. The span at 238–249 (TSSTPTSTRTPP) shows a compositional bias: low complexity. Polar residues predominate over residues 261–276 (PLSSTPSPRTESTKSA).

It is found in the nucleus. Transcription factor that regulates the expression of the gene cluster that mediates the biosynthesis of the tetramic acid Sch210972, a potential anti-HIV fungal natural product that contains a decalin core. This is Transcription factor cghF from Chaetomium globosum (strain ATCC 6205 / CBS 148.51 / DSM 1962 / NBRC 6347 / NRRL 1970) (Soil fungus).